A 30-amino-acid polypeptide reads, in one-letter code: Photosystem II reaction center protein Psb30 (30 aa).

Topologically, residues 1 to 6 (EVIAQL) are lumenal. The helical transmembrane segment at 7 to 21 (TMIAMIGIAGPMIIF) threads the bilayer. The Cytoplasmic portion of the chain corresponds to 22–30 (LLAVRRGNL).

This sequence belongs to the Psb30/Ycf12 family. PSII is composed of 1 copy each of membrane proteins PsbA, PsbB, PsbC, PsbD, PsbE, PsbF, PsbH, PsbI, PsbJ, PsbK, PsbL, PsbM, PsbT, PsbX, PsbY, PsbZ, Psb30/Ycf12, peripheral proteins PsbO, CyanoQ (PsbQ), PsbU, PsbV and a large number of cofactors. It forms dimeric complexes. Requires PSII binds multiple chlorophylls, carotenoids and specific lipids. as cofactor.

It is found in the cellular thylakoid membrane. Its function is as follows. A core subunit of photosystem II (PSII), probably helps stabilize the reaction center. PSII is a light-driven water plastoquinone oxidoreductase, using light energy to abstract electrons from H(2)O, generating a proton gradient subsequently used for ATP formation. This chain is Photosystem II reaction center protein Psb30, found in Thermostichus vulcanus (Synechococcus vulcanus).